We begin with the raw amino-acid sequence, 208 residues long: Uracil phosphoribosyltransferase (208 aa).

5-phospho-alpha-D-ribose 1-diphosphate-binding positions include Arg78, Arg103, and 130-138 (DPMLATGGS). Uracil-binding positions include Ile193 and 198–200 (GDA). Asp199 contributes to the 5-phospho-alpha-D-ribose 1-diphosphate binding site.

This sequence belongs to the UPRTase family. It depends on Mg(2+) as a cofactor.

It carries out the reaction UMP + diphosphate = 5-phospho-alpha-D-ribose 1-diphosphate + uracil. It functions in the pathway pyrimidine metabolism; UMP biosynthesis via salvage pathway; UMP from uracil: step 1/1. Its activity is regulated as follows. Allosterically activated by GTP. In terms of biological role, catalyzes the conversion of uracil and 5-phospho-alpha-D-ribose 1-diphosphate (PRPP) to UMP and diphosphate. In Shewanella piezotolerans (strain WP3 / JCM 13877), this protein is Uracil phosphoribosyltransferase.